The chain runs to 97 residues: MKKRSSRKLAQVIGRKTGNYFPASIEGETKKEHKHHYSTASKEKESLRKRAKEFDVLVHSLLDKHVPQNSDQVLIFTYQNGFVETDFHNFGRYSVKL.

The segment at 24-45 (SIEGETKKEHKHHYSTASKEKE) is disordered.

The polypeptide is Late transcription unit B protein (ltuB) (Chlamydia trachomatis serovar D (strain ATCC VR-885 / DSM 19411 / UW-3/Cx)).